The primary structure comprises 361 residues: Peptide chain release factor 1 (361 aa).

Q237 is modified (N5-methylglutamine). Residues 287–297 (KQQKEQSDTRK) show a composition bias toward basic and acidic residues. The segment at 287-313 (KQQKEQSDTRKSLVGSGDRSERIRTYN) is disordered.

This sequence belongs to the prokaryotic/mitochondrial release factor family. Methylated by PrmC. Methylation increases the termination efficiency of RF1.

Its subcellular location is the cytoplasm. Functionally, peptide chain release factor 1 directs the termination of translation in response to the peptide chain termination codons UAG and UAA. This chain is Peptide chain release factor 1, found in Francisella tularensis subsp. novicida (strain U112).